We begin with the raw amino-acid sequence, 287 residues long: GTPase Era (287 aa).

An Era-type G domain is found at 6 to 178 (FSGTSVIIGK…IQNKLKIVPK (173 aa)). The segment at 14–21 (GKPNVGKS) is G1. 14 to 21 (GKPNVGKS) is a binding site for GTP. Residues 40–44 (HTTQS) are G2. The segment at 62–65 (DTPG) is G3. GTP is bound by residues 62–66 (DTPGI) and 124–127 (NKID). The interval 124–127 (NKID) is G4. Residues 154–156 (ISG) form a G5 region. Residues 207 to 282 (LGDELPYSIQ…SIYLSLKVIK (76 aa)) enclose the KH type-2 domain.

This sequence belongs to the TRAFAC class TrmE-Era-EngA-EngB-Septin-like GTPase superfamily. Era GTPase family. Monomer.

Its subcellular location is the cytoplasm. It localises to the cell membrane. Its function is as follows. An essential GTPase that binds both GDP and GTP, with rapid nucleotide exchange. Plays a role in 16S rRNA processing and 30S ribosomal subunit biogenesis and possibly also in cell cycle regulation and energy metabolism. The protein is GTPase Era of Buchnera aphidicola subsp. Baizongia pistaciae (strain Bp).